The sequence spans 267 residues: Type III pantothenate kinase (267 aa).

An ATP-binding site is contributed by 6-13 (DSGNSRLK). Residues Tyr96 and 103-106 (GADR) contribute to the substrate site. Asp105 functions as the Proton acceptor in the catalytic mechanism. Thr131 is an ATP binding site. Thr181 is a binding site for substrate.

It belongs to the type III pantothenate kinase family. Homodimer. Requires NH4(+) as cofactor. K(+) is required as a cofactor.

The protein localises to the cytoplasm. The enzyme catalyses (R)-pantothenate + ATP = (R)-4'-phosphopantothenate + ADP + H(+). The protein operates within cofactor biosynthesis; coenzyme A biosynthesis; CoA from (R)-pantothenate: step 1/5. In terms of biological role, catalyzes the phosphorylation of pantothenate (Pan), the first step in CoA biosynthesis. Activates transcription of the pertussis toxin operon in a BvgAS-dependent manner. May interact with the alpha subunit of RNA polymerase. This chain is Type III pantothenate kinase (coaX), found in Bordetella pertussis (strain Tohama I / ATCC BAA-589 / NCTC 13251).